A 689-amino-acid polypeptide reads, in one-letter code: ATP-dependent zinc metalloprotease FtsH 2 (689 aa).

The Cytoplasmic portion of the chain corresponds to 1–3 (MRK). Residues 4–24 (FFRGASFYILAFIIILFIVQN) traverse the membrane as a helical segment. The Extracellular portion of the chain corresponds to 25-111 (FGRPTQEIDE…SAAPPPTTPW (87 aa)). A helical membrane pass occupies residues 112–132 (FIELLPSIFMVLIFIVFWFVF). Topologically, residues 133 to 689 (MQQSQGGGNR…QDNEENRKEE (557 aa)) are cytoplasmic. 205 to 212 (GPPGTGKT) is an ATP binding site. Histidine 427 contacts Zn(2+). The active site involves glutamate 428. Histidine 431 and aspartate 503 together coordinate Zn(2+). Over residues 661-673 (EELIEVSSDKEEE) the composition is skewed to basic and acidic residues. The interval 661–689 (EELIEVSSDKEEEKDNQDDQDNEENRKEE) is disordered.

This sequence in the central section; belongs to the AAA ATPase family. The protein in the C-terminal section; belongs to the peptidase M41 family. As to quaternary structure, homohexamer. Zn(2+) serves as cofactor.

Its subcellular location is the cell membrane. Acts as a processive, ATP-dependent zinc metallopeptidase for both cytoplasmic and membrane proteins. Plays a role in the quality control of integral membrane proteins. This chain is ATP-dependent zinc metalloprotease FtsH 2, found in Alkaliphilus metalliredigens (strain QYMF).